The following is a 418-amino-acid chain: Light-independent protochlorophyllide reductase subunit N (418 aa).

[4Fe-4S] cluster contacts are provided by Cys-17, Cys-42, and Cys-103.

The protein belongs to the BchN/ChlN family. Protochlorophyllide reductase is composed of three subunits; ChlL, ChlN and ChlB. Forms a heterotetramer of two ChlB and two ChlN subunits. [4Fe-4S] cluster is required as a cofactor.

The catalysed reaction is chlorophyllide a + oxidized 2[4Fe-4S]-[ferredoxin] + 2 ADP + 2 phosphate = protochlorophyllide a + reduced 2[4Fe-4S]-[ferredoxin] + 2 ATP + 2 H2O. It participates in porphyrin-containing compound metabolism; chlorophyll biosynthesis (light-independent). Its function is as follows. Component of the dark-operative protochlorophyllide reductase (DPOR) that uses Mg-ATP and reduced ferredoxin to reduce ring D of protochlorophyllide (Pchlide) to form chlorophyllide a (Chlide). This reaction is light-independent. The NB-protein (ChlN-ChlB) is the catalytic component of the complex. In Prochlorococcus marinus (strain NATL2A), this protein is Light-independent protochlorophyllide reductase subunit N.